A 333-amino-acid polypeptide reads, in one-letter code: Anthranilate phosphoribosyltransferase (333 aa).

5-phospho-alpha-D-ribose 1-diphosphate is bound by residues Gly-81, 84-85, Thr-89, 91-94, 109-117, and Ser-121; these read GD, NIST, and KHGNRSVSS. Residue Gly-81 participates in anthranilate binding. Ser-93 serves as a coordination point for Mg(2+). Asn-112 is an anthranilate binding site. Residue Arg-167 participates in anthranilate binding. The Mg(2+) site is built by Asp-225 and Glu-226.

Belongs to the anthranilate phosphoribosyltransferase family. Homodimer. It depends on Mg(2+) as a cofactor.

The catalysed reaction is N-(5-phospho-beta-D-ribosyl)anthranilate + diphosphate = 5-phospho-alpha-D-ribose 1-diphosphate + anthranilate. Its pathway is amino-acid biosynthesis; L-tryptophan biosynthesis; L-tryptophan from chorismate: step 2/5. In terms of biological role, catalyzes the transfer of the phosphoribosyl group of 5-phosphorylribose-1-pyrophosphate (PRPP) to anthranilate to yield N-(5'-phosphoribosyl)-anthranilate (PRA). This is Anthranilate phosphoribosyltransferase from Glaesserella parasuis serovar 5 (strain SH0165) (Haemophilus parasuis).